A 350-amino-acid chain; its full sequence is MKLEQITEELKSQQADAAWITTPLNIFYFTGYLSDPHERLLALLIKSNGEQVLFCPQLEVEEVRASPFNGEVIGYLDTENALDKYDIKFNKLLVESAHLTLQRQRELIDAFGVQSFGDIDQTIKTLRNIKSDSEIEKIKKACELADKCIEIGVSFLKEGVTERQVVNHIEYEIKAYGVNEMSFDTMVLFGDHAASPHGTPGDRQLKKDEFVLFDLGVIYENYCSDMTRTVKFGTPDAKAQEIYDVVLKAEKEAIAAIKPGVTIKDVDDIARNIITEAGYGEYFPHRLGHGLGLEEHEYQDVSSTNTNEFKAGMVITVEPGIYVPGVAGVRIEDDILVTENGNESLTGYEK.

Asp-214, Asp-225, His-289, Glu-318, and Glu-332 together coordinate Mn(2+).

It belongs to the peptidase M24B family. It depends on Mn(2+) as a cofactor.

This is an uncharacterized protein from Staphylococcus saprophyticus subsp. saprophyticus (strain ATCC 15305 / DSM 20229 / NCIMB 8711 / NCTC 7292 / S-41).